The chain runs to 1671 residues: Kinesin-like protein unc-104 (1671 aa).

Residues 3–351 form the Kinesin motor domain; the sequence is SVKVAVRVRP…LRYADRAKQI (349 aa). Residue 97-104 participates in ATP binding; the sequence is GQTGAGKS. Residues 358 to 437 are a coiled coil; that stretch reads NEDANAKLIR…IAELNETWEE (80 aa). The disordered stretch occupies residues 391 to 413; it reads DELNKSTTGIKSPSKSRNRNGST. Positions 395–413 are enriched in polar residues; it reads KSTTGIKSPSKSRNRNGST. The region spanning 500–566 is the FHA domain; it reads TRLGTHEANV…LKTGSRVILG (67 aa). Residues 577 to 674 adopt a coiled-coil conformation; it reads EQARELREKI…EEQSMTMSMY (98 aa). The disordered stretch occupies residues 949-973; sequence DVDSGRGIDSNSASDCPENAEEPGE. Positions 1538–1636 constitute a PH domain; that stretch reads VVARKGLLNV…WLYAINPLLA (99 aa).

Belongs to the TRAFAC class myosin-kinesin ATPase superfamily. Kinesin family. Unc-104 subfamily. In terms of assembly, monomer.

The protein resides in the cytoplasm. It localises to the cytoskeleton. Required for presynaptic maturation, has a role in axonal transport of dense-core vesicles carrying synaptic vesicle precursors, components required for the morphological transformation of axonal growth cones to mature boutons. In Drosophila pseudoobscura pseudoobscura (Fruit fly), this protein is Kinesin-like protein unc-104.